The chain runs to 43 residues: DeltaKappa-actitoxin-Avd4b (43 aa).

Cystine bridges form between Cys-4–Cys-39, Cys-6–Cys-32, and Cys-22–Cys-40.

The protein belongs to the sea anemone type 3 (BDS) potassium channel toxin family.

It is found in the secreted. Its subcellular location is the nematocyst. Functionally, acts as a gating modifier on both Kv and Nav ion channels. Voltage-dependently inhibits voltage-gated potassium channels Kv3 (Kv3.1/KCNC1, Kv3.2/KCNC2 and Kv3.4/KCNC4). Slows inactivation of the voltage-gated sodium channel Nav1.7/SCN9A. Inhibits all Kv3.1, Kv3.2 and Kv3.4 by about 50% when tested at a voltage of +40 mV. May act by binding residues in voltage-sensing domains S3b and S4 of Kv3. Tests have been done on human Nav1.7/SCN9A and rat SCG neurons that mostly carry Nav1.7 channels (EC(50)=300 nM). This toxin also reduces blood pressure. This is DeltaKappa-actitoxin-Avd4b from Anemonia sulcata (Mediterranean snakelocks sea anemone).